The chain runs to 240 residues: MIILPAIDIIDGKPVRLYQGDYNKKEIVADDVFETAKSFQDMGAEYIHLVDLDGAKSGSNQNHELVIKIANELNIPVELGGGIRSFETIKYLLDNGVARVILGTIAMEDEELLKKAIAIYDSKIAVGIDCKDGKVYGRGWLAASDLDYIEFAKKMENIGVKNIIVTDISKDGTLEGPNVEMLKKLKRTVSIDITASGGIKDIENIKELKNIDLYGAITGKAIYAKTLSLEKAIEISKEGR.

Asp-8 serves as the catalytic Proton acceptor. Residue Asp-129 is the Proton donor of the active site.

This sequence belongs to the HisA/HisF family.

Its subcellular location is the cytoplasm. It catalyses the reaction 1-(5-phospho-beta-D-ribosyl)-5-[(5-phospho-beta-D-ribosylamino)methylideneamino]imidazole-4-carboxamide = 5-[(5-phospho-1-deoxy-D-ribulos-1-ylimino)methylamino]-1-(5-phospho-beta-D-ribosyl)imidazole-4-carboxamide. The protein operates within amino-acid biosynthesis; L-histidine biosynthesis; L-histidine from 5-phospho-alpha-D-ribose 1-diphosphate: step 4/9. In Clostridium beijerinckii (strain ATCC 51743 / NCIMB 8052) (Clostridium acetobutylicum), this protein is 1-(5-phosphoribosyl)-5-[(5-phosphoribosylamino)methylideneamino] imidazole-4-carboxamide isomerase.